We begin with the raw amino-acid sequence, 211 residues long: Mitotic spindle assembly checkpoint protein MAD2B (211 aa).

The region spanning 13 to 203 is the HORMA domain; the sequence is QVVADVLSEF…SDILKMQLYV (191 aa).

Homooligomer. Interacts with REV1. Interacts with FZR1 (in complex with the anaphase promoting complex APC). May interact with CDC20. Heterodimer with REV3L. This dimer forms the minimal DNA polymerase zeta complex (Pol-zeta2), with REV3L bearing DNA polymerase catalytic activity, although its activity is very low in this context. Component of the tetrameric Pol-zeta complex (Pol-zeta4), which consists of REV3L, MAD2L2, POLD2 and POLD3; Pol-zeta4 is the fully active form of DNA polymerase zeta. Component of the shieldin complex, consisting of SHLD1, SHLD2, SHLD3 and MAD2L2/REV7. Within the complex, SHLD2 forms a scaffold which interacts with a SHLD3-MAD2L2 subcomplex via its N-terminus, and with SHLD1 via its C-terminus.

Its subcellular location is the nucleus. It localises to the cytoplasm. It is found in the cytoskeleton. The protein resides in the spindle. The protein localises to the chromosome. Functionally, adapter protein able to interact with different proteins and involved in different biological processes. Mediates the interaction between the error-prone DNA polymerase zeta catalytic subunit REV3L and the inserter polymerase REV1, thereby mediating the second polymerase switching in translesion DNA synthesis. Translesion DNA synthesis releases the replication blockade of replicative polymerases, stalled in presence of DNA lesions. May also play a role in signal transduction in response to DNA damage. May regulate the activation of the anaphase promoting complex APC thereby regulating progression through the cell cycle. Component of the shieldin complex, which plays an important role in repair of DNA double-stranded breaks (DSBs). During G1 and S phase of the cell cycle, the complex functions downstream of TP53BP1 to promote non-homologous end joining (NHEJ) and suppress DNA end resection. Through transcriptional regulation may play a role in epithelial-mesenchymal transdifferentiation. The sequence is that of Mitotic spindle assembly checkpoint protein MAD2B (MAD2L2) from Gallus gallus (Chicken).